Here is a 261-residue protein sequence, read N- to C-terminus: Large ribosomal subunit protein uL10m (261 aa).

Residues 1–28 constitute a mitochondrion transit peptide; it reads MAAAVAGMLRGGLLPQAGRLPTLQTVRY. The disordered stretch occupies residues 242 to 261; sequence EKDSVMSANGKPDPDTVPDS.

This sequence belongs to the universal ribosomal protein uL10 family. As to quaternary structure, component of the mitochondrial large ribosomal subunit (mt-LSU). Mature mammalian 55S mitochondrial ribosomes consist of a small (28S) and a large (39S) subunit. The 28S small subunit contains a 12S ribosomal RNA (12S mt-rRNA) and 30 different proteins. The 39S large subunit contains a 16S rRNA (16S mt-rRNA), a copy of mitochondrial valine transfer RNA (mt-tRNA(Val)), which plays an integral structural role, and 52 different proteins. uL10m contributes a single cysteine residue to a zinc-binding site with mL66.

It localises to the mitochondrion. This chain is Large ribosomal subunit protein uL10m (MRPL10), found in Homo sapiens (Human).